The chain runs to 257 residues: Zinc uptake system ATP-binding protein ZurA (257 aa).

Positions 5 to 241 constitute an ABC transporter domain; sequence IEVNNVSYHY…ADRELEILAE (237 aa). 37-44 contributes to the ATP binding site; that stretch reads GPNGSGKS.

It belongs to the ABC transporter superfamily.

Functionally, involved in a zinc uptake transport system. The chain is Zinc uptake system ATP-binding protein ZurA (zurA) from Listeria monocytogenes serovar 1/2a (strain ATCC BAA-679 / EGD-e).